Here is a 121-residue protein sequence, read N- to C-terminus: Large ribosomal subunit protein bL19 (121 aa).

Belongs to the bacterial ribosomal protein bL19 family.

Its function is as follows. This protein is located at the 30S-50S ribosomal subunit interface and may play a role in the structure and function of the aminoacyl-tRNA binding site. The chain is Large ribosomal subunit protein bL19 from Amoebophilus asiaticus (strain 5a2).